Consider the following 475-residue polypeptide: E3 ubiquitin-protein ligase TRIM62 (475 aa).

Residues 11–54 form an RING-type zinc finger; the sequence is CSICLSIYQDPVSLGCEHYFCRRCITEHWVRQEAQGARDCPECR. Residues 88–128 form a B box-type zinc finger; it reads RAARPCQAHDKVKLFCLTDRALLCFFCDEPALHEQHQVTGI. The Zn(2+) site is built by C93, H96, C114, and H120. Residues 121–241 adopt a coiled-coil conformation; the sequence is EQHQVTGIDD…LQERLAETDR (121 aa). The region spanning 277–475 is the B30.2/SPRY domain; that stretch reads PLQYTIWKSL…QPLRINTVRI (199 aa).

Belongs to the TRIM/RBCC family. In terms of assembly, interacts with the ubiquitin-conjugating enzyme, UBE2D2. Post-translationally, polyubiquitinated, autoubiquitinated in the presence of UBE2D2.

Its subcellular location is the cytoplasm. It carries out the reaction S-ubiquitinyl-[E2 ubiquitin-conjugating enzyme]-L-cysteine + [acceptor protein]-L-lysine = [E2 ubiquitin-conjugating enzyme]-L-cysteine + N(6)-ubiquitinyl-[acceptor protein]-L-lysine.. It participates in protein modification; protein ubiquitination. E3 ubiquitin ligase that plays a role in antifungal immunity by mediating 'Lys-27'-linked ubiquitination of CARD9 downstream of C-type lectin receptors; leading to CARD9 activation, followed by activation of NF-kappa-B and MAP kinase p38 pathways. E3 ubiquitin ligase activity is dependent on E2 ubiquitin-conjugating enzyme UBE2D2. The sequence is that of E3 ubiquitin-protein ligase TRIM62 from Mus musculus (Mouse).